An 87-amino-acid polypeptide reads, in one-letter code: Small ribosomal subunit protein bS18 (87 aa).

It belongs to the bacterial ribosomal protein bS18 family. In terms of assembly, part of the 30S ribosomal subunit. Forms a tight heterodimer with protein bS6.

Functionally, binds as a heterodimer with protein bS6 to the central domain of the 16S rRNA, where it helps stabilize the platform of the 30S subunit. The polypeptide is Small ribosomal subunit protein bS18 (Nitratidesulfovibrio vulgaris (strain ATCC 29579 / DSM 644 / CCUG 34227 / NCIMB 8303 / VKM B-1760 / Hildenborough) (Desulfovibrio vulgaris)).